The sequence spans 77 residues: U8-lycotoxin-Ls1v (77 aa).

Positions 1 to 20 (MKLIIFTGLVLFGIVSLIEA) are cleaved as a signal peptide. The propeptide occupies 21–26 (QAENEK).

This sequence belongs to the neurotoxin 19 (CSTX) family. 08 (U8-Lctx) subfamily. In terms of processing, contains 4 disulfide bonds. As to expression, expressed by the venom gland.

The protein resides in the secreted. The sequence is that of U8-lycotoxin-Ls1v from Lycosa singoriensis (Wolf spider).